Consider the following 157-residue polypeptide: UPF0262 protein RL0614 (157 aa).

It belongs to the UPF0262 family.

This Rhizobium johnstonii (strain DSM 114642 / LMG 32736 / 3841) (Rhizobium leguminosarum bv. viciae) protein is UPF0262 protein RL0614.